A 576-amino-acid polypeptide reads, in one-letter code: 60 kDa heat shock protein homolog 2, mitochondrial (576 aa).

Residues 1-61 (MMRMFRYTNT…AVTMGPKGRN (61 aa)) constitute a mitochondrion transit peptide.

This sequence belongs to the chaperonin (HSP60) family. First detectable expression is seen in the posterior part of the dorsal tracheal trunk at stage 14-15, which marks the beginning of terminal tracheation. In the larval gut, expression in proventriculus is stronger than in midgut and hindgut. Malpighian tubules shows low expression and late third instar larval imaginal disks and brain showed moderate expression. In larval ovary and testis, expression is strong in the posterior region.

Its subcellular location is the mitochondrion matrix. Functionally, prevents misfolding and promotes the refolding and proper assembly of unfolded polypeptides generated under stress conditions. Essential for proper development of trachea, spermatogonia and spermatocytes. This is 60 kDa heat shock protein homolog 2, mitochondrial (Hsp60C) from Drosophila melanogaster (Fruit fly).